The primary structure comprises 253 residues: Neurotrophin-3 (253 aa).

The first 18 residues, 1–18 (MSILFYVMFLAYLRGVQG), serve as a signal peptide directing secretion. A propeptide spanning residues 19-134 (NSMDQRSLPE…AANRTSRRKR (116 aa)) is cleaved from the precursor. The disordered stretch occupies residues 62 to 89 (TLPKAEAPPREPAKSEFQPVTAMGPELL). N-linked (GlcNAc...) asparagine glycosylation is present at N127. 3 cysteine pairs are disulfide-bonded: C148-C213, C191-C242, and C201-C244.

It belongs to the NGF-beta family.

It localises to the secreted. Seems to promote the survival of visceral and proprioceptive sensory neurons. In Bos taurus (Bovine), this protein is Neurotrophin-3 (NTF3).